Consider the following 94-residue polypeptide: Sulfocarbamoylase-1 (94 aa).

Homodimer. Ubiquitous (at protein level). Highest levels of expression in crystalline style followed by digestive gland and mantle.

Strongly inhibited by the serine proteinase inhibitor AEBSF. Weakly inhibited by the proteinase inhibitors BSF and aprotinin, and by EDTA. Not inhibited by the proteinase inhibitors bestatin, E-64 and leupeptin. Hydrolysis of sulfocarbamoyl esters of paralytic shellfish toxins. Does not hydrolyze the carbamoyl esters of paralytic shellfish toxins. Ester hydrolysis is significantly affected by the stereochemistry of sulfate esters at C-11 of the substrate toxin. This Megangulus venulosus (Japanese bivalve) protein is Sulfocarbamoylase-1.